We begin with the raw amino-acid sequence, 776 residues long: MELHFGSCLSGCLALLVLLPSLSLAQYEGWPYQLQYPEYFQQPAPEHHQRQVPSDVVKIQVRLAGQKRKHNEGRVEVYYEGQWGTVCDDDFSIHAAHVVCRQVGYVEAKSWAASSSYGPGEGPIWLDNIYCTGKESTLASCSSNGWGVTDCKHTEDVGVVCSEKRIPGFKFDNSLINQIESLNIQVEDIRIRPILSAFRHRKPVTEGYVEVKEGKAWKQICNKHWTAKNSHVVCGMFGFPAEKTYNPKAYKTFASRRKLRYWKFSMNCTGTEAHISSCKLGPSVTRDPVKNATCENGQPAVVSCVPSQIFSPDGPSRFRKAYKPEQPLVRLRGGAQVGEGRVEVLKNGEWGTICDDKWDLVSASVVCRELGFGTAKEAITGSRLGQGIGPIHLNEVQCTGTEKSIIDCKFNTESQGCNHEEDAGVRCNIPIMGFQKKVRLNGGRNPYEGRVEVLTERNGSLVWGTVCGQNWGIVEAMVVCRQLGLGFASNAFQETWYWHGNIFANNVVMSGVKCSGTELSLAHCRHDEEVACPEGGVRFGAGVACSETAPDLVLNAEIVQQTAYLEDRPMSLLQCAMEENCLSASAVHTDPTRGHRRLLRFSSQIHNNGQSDFRPKNGRHAWIWHDCHRHYHSMEVFTYYDLLSLNGTKVAEGHKASFCLEDTECEGDIQKSYECANFGEQGITMGCWDMYRHDIDCQWIDITDVPPGDYLFQVVINPNYEVPESDFSNNIMKCRSRYDGYRIWMYNCHVGGAFSEETEQKFEHFSGLLNNQLSVQ.

Residues 1 to 25 (MELHFGSCLSGCLALLVLLPSLSLA) form the signal peptide. SRCR domains lie at 61–162 (VRLA…VVCS), 191–305 (IRPI…VSCV), 329–428 (VRLR…VRCN), and 438–546 (VRLN…VACS). 9 disulfide bridges follow: C87–C151, C100–C161, C131–C141, C221–C294, C234–C304, C268–C278, C354–C417, C367–C427, and C398–C408. N-linked (GlcNAc...) asparagine glycosylation occurs at N267. A glycan (N-linked (GlcNAc...) asparagine) is linked at N291. An N-linked (GlcNAc...) asparagine glycan is attached at N458. 3 cysteine pairs are disulfide-bonded: C467/C532, C480/C545, and C514/C524. Residues 550-753 (PDLVLNAEIV…WMYNCHVGGA (204 aa)) form a lysyl-oxidase like region. Residues D551 and L552 each coordinate Ca(2+). Cystine bridges form between C575/C627, C581/C697, C659/C675, and C665/C687. Residues H628, H630, and H632 each contribute to the Cu cation site. N646 is a glycosylation site (N-linked (GlcNAc...) asparagine). A cross-link (lysine tyrosylquinone (Lys-Tyr)) is located at residues 655 to 691 (KASFCLEDTECEGDIQKSYECANFGEQGITMGCWDMY). Y691 carries the post-translational modification 2',4',5'-topaquinone. Ca(2+) contacts are provided by E724, D726, N729, and N730. The cysteines at positions 734 and 748 are disulfide-linked.

It belongs to the lysyl oxidase family. As to quaternary structure, component of some chromatin repressor complex. Interacts with SNAI1. Interacts with TAF10. Interacts with HSPA5. Interacts with EFEMP2. Cu cation is required as a cofactor. The cofactor is lysine tyrosylquinone residue. Post-translationally, the lysine tyrosylquinone cross-link (LTQ) is generated by condensation of the epsilon-amino group of a lysine with a topaquinone produced by oxidation of tyrosine. N-glycosylated. N-glycosylation on Asn-458 and Asn-646 may be essential for proper folding and secretion; may be composed of a fucosylated carbohydrates attached to a trimannose N-linked glycan core. Ubiquitous. Highest expression in skin, lung and thymus. Present in chondrocytes: mainly expressed by chondrocytes in healing fractures and in epiphyseal growth plates (at protein level).

The protein localises to the secreted. It is found in the extracellular space. Its subcellular location is the extracellular matrix. The protein resides in the basement membrane. It localises to the nucleus. The protein localises to the chromosome. It is found in the endoplasmic reticulum. It carries out the reaction L-lysyl-[protein] + O2 + H2O = (S)-2-amino-6-oxohexanoyl-[protein] + H2O2 + NH4(+). Specifically inhibited by a mouse monoclonal antibody AB0023, inhibition occurs in a non-competitive manner. Its function is as follows. Mediates the post-translational oxidative deamination of lysine residues on target proteins leading to the formation of deaminated lysine (allysine). Acts as a transcription corepressor and specifically mediates deamination of trimethylated 'Lys-4' of histone H3 (H3K4me3), a specific tag for epigenetic transcriptional activation. Shows no activity against histone H3 when it is trimethylated on 'Lys-9' (H3K9me3) or 'Lys-27' (H3K27me3) or when 'Lys-4' is monomethylated (H3K4me1) or dimethylated (H3K4me2). Also mediates deamination of methylated TAF10, a member of the transcription factor IID (TFIID) complex, which induces release of TAF10 from promoters, leading to inhibition of TFIID-dependent transcription. LOXL2-mediated deamination of TAF10 results in transcriptional repression of genes required for embryonic stem cell pluripotency including POU5F1/OCT4, NANOG, KLF4 and SOX2. Involved in epithelial to mesenchymal transition (EMT) via interaction with SNAI1 and participates in repression of E-cadherin, probably by mediating deamination of histone H3. During EMT, involved with SNAI1 in negatively regulating pericentromeric heterochromatin transcription. SNAI1 recruits LOXL2 to pericentromeric regions to oxidize histone H3 and repress transcription which leads to release of heterochromatin component CBX5/HP1A, enabling chromatin reorganization and acquisition of mesenchymal traits. Interacts with the endoplasmic reticulum protein HSPA5 which activates the IRE1-XBP1 pathway of the unfolded protein response, leading to expression of several transcription factors involved in EMT and subsequent EMT induction. When secreted into the extracellular matrix, promotes cross-linking of extracellular matrix proteins by mediating oxidative deamination of peptidyl lysine residues in precursors to fibrous collagen and elastin. Acts as a regulator of sprouting angiogenesis, probably via collagen IV scaffolding. Acts as a regulator of chondrocyte differentiation, probably by regulating expression of factors that control chondrocyte differentiation. The polypeptide is Lysyl oxidase homolog 2 (Loxl2) (Mus musculus (Mouse)).